The sequence spans 579 residues: Protein PLASTID MOVEMENT IMPAIRED 15 (579 aa).

Coiled-coil stretches lie at residues 90–161 (EVLK…NEEH), 188–216 (KVLD…IEIE), 383–419 (QKTK…KLES), and 481–501 (LMKT…EERE).

It belongs to the WEB family.

Its function is as follows. Required for the chloroplast avoidance response under high intensity blue light. This avoidance response consists in the relocation of chloroplasts on the anticlinal side of exposed cells. The sequence is that of Protein PLASTID MOVEMENT IMPAIRED 15 (PMI15) from Arabidopsis thaliana (Mouse-ear cress).